The following is a 246-amino-acid chain: NADH-quinone oxidoreductase subunit C (246 aa).

This sequence belongs to the complex I 30 kDa subunit family. In terms of assembly, NDH-1 is composed of 14 different subunits. Subunits NuoB, C, D, E, F, and G constitute the peripheral sector of the complex.

The protein resides in the cell inner membrane. It catalyses the reaction a quinone + NADH + 5 H(+)(in) = a quinol + NAD(+) + 4 H(+)(out). Functionally, NDH-1 shuttles electrons from NADH, via FMN and iron-sulfur (Fe-S) centers, to quinones in the respiratory chain. The immediate electron acceptor for the enzyme in this species is believed to be ubiquinone. Couples the redox reaction to proton translocation (for every two electrons transferred, four hydrogen ions are translocated across the cytoplasmic membrane), and thus conserves the redox energy in a proton gradient. The protein is NADH-quinone oxidoreductase subunit C of Halorhodospira halophila (strain DSM 244 / SL1) (Ectothiorhodospira halophila (strain DSM 244 / SL1)).